The following is a 696-amino-acid chain: D-(-)-3-hydroxybutyrate oligomer hydrolase (696 aa).

The signal sequence occupies residues M1 to N26. The Charge relay system role is filled by S309.

The protein belongs to the D-(-)-3-hydroxybutyrate oligomer hydrolase family.

Its subcellular location is the secreted. It carries out the reaction (3R)-hydroxybutanoate dimer + H2O = 2 (R)-3-hydroxybutanoate + H(+). The protein operates within lipid metabolism; butanoate metabolism. Functionally, participates in the degradation of poly-3-hydroxybutyrate (PHB). It works downstream of poly(3-hydroxybutyrate) depolymerase, hydrolyzing D(-)-3-hydroxybutyrate oligomers of various length (3HB-oligomers) into 3HB-monomers. The polypeptide is D-(-)-3-hydroxybutyrate oligomer hydrolase (Burkholderia cenocepacia (strain HI2424)).